The sequence spans 102 residues: NADH-quinone oxidoreductase subunit K 1 (102 aa).

3 helical membrane passes run Leu-5–Val-25, Ile-30–Gly-50, and Val-62–Val-82.

Belongs to the complex I subunit 4L family. NDH-1 is composed of 14 different subunits. Subunits NuoA, H, J, K, L, M, N constitute the membrane sector of the complex.

The protein resides in the cell inner membrane. The catalysed reaction is a quinone + NADH + 5 H(+)(in) = a quinol + NAD(+) + 4 H(+)(out). NDH-1 shuttles electrons from NADH, via FMN and iron-sulfur (Fe-S) centers, to quinones in the respiratory chain. The immediate electron acceptor for the enzyme in this species is believed to be ubiquinone. Couples the redox reaction to proton translocation (for every two electrons transferred, four hydrogen ions are translocated across the cytoplasmic membrane), and thus conserves the redox energy in a proton gradient. In Geotalea uraniireducens (strain Rf4) (Geobacter uraniireducens), this protein is NADH-quinone oxidoreductase subunit K 1.